Reading from the N-terminus, the 300-residue chain is MDTTLSHTPGSRLSQYLALTKPRVTQLAVFCAVIGMFLATPGMVPWKVLLGGTIGIGLLAGSAFAINCLVEQKIDAMMRRTAWRPSARGEITTLQILAFSTVLGGLGAWTLYTFTNPLTIWLTIATFVGYAVIYTLLLKPMTPQNIVIGGASGAMPPALGWAAVTGAVPGDAWILVLIIFVWTPPHFWVLALYRRKDYENAGLPMLPVTHGEQFTRLHILLYTVILFAVTMMPFISGMSGAVYLTSAVLLGALFLAYAWKIYRDYSDALARRAFRYSIVYLSLLFAALLVDHYARPVIGM.

A run of 9 helical transmembrane segments spans residues 24–44 (VTQL…PGMV), 48–68 (VLLG…AINC), 94–114 (LQIL…LYTF), 118–138 (LTIW…TLLL), 146–166 (IVIG…AVTG), 172–192 (AWIL…VLAL), 217–237 (LHIL…FISG), 239–259 (SGAV…AYAW), and 278–298 (IVYL…RPVI).

The protein belongs to the UbiA prenyltransferase family. Protoheme IX farnesyltransferase subfamily.

It is found in the cell inner membrane. The enzyme catalyses heme b + (2E,6E)-farnesyl diphosphate + H2O = Fe(II)-heme o + diphosphate. It functions in the pathway porphyrin-containing compound metabolism; heme O biosynthesis; heme O from protoheme: step 1/1. Functionally, converts heme B (protoheme IX) to heme O by substitution of the vinyl group on carbon 2 of heme B porphyrin ring with a hydroxyethyl farnesyl side group. The polypeptide is Protoheme IX farnesyltransferase (Burkholderia mallei (strain NCTC 10247)).